Here is a 400-residue protein sequence, read N- to C-terminus: Multidrug resistance protein MdtH (400 aa).

The next 10 membrane-spanning stretches (helical) occupy residues 13 to 33, 34 to 54, 99 to 116, 139 to 159, 165 to 185, 214 to 234, 244 to 264, 289 to 309, 340 to 360, and 365 to 385; these read YFLLLDNMLVVLGFFVVFPLI, SIRFVEQLGWAGVIVGFALGL, PWILWLSCILSALGGTLF, LLLMQDSAGAVIGALIGSWLL, LVCWVGAGIFVLAAIFNAWLL, VLTLTGYFVLSVQVMLMFPIV, AVKWMYAIEALLSLTLLYPIA, FPVGITHSLHAIFLIITLFYL, LGLAFGGAIGYTGGGWMYDIG, and LPELPWFLLGSIGFITLYALH.

The protein belongs to the major facilitator superfamily. DHA1 family. MdtH (TC 2.A.1.2.21) subfamily.

The protein resides in the cell inner membrane. This chain is Multidrug resistance protein MdtH, found in Proteus mirabilis (strain HI4320).